Reading from the N-terminus, the 288-residue chain is 4-diphosphocytidyl-2-C-methyl-D-erythritol kinase (288 aa).

Residue lysine 13 is part of the active site. Position 97–107 (97–107 (PMGGGIGGGSS)) interacts with ATP. Residue aspartate 139 is part of the active site.

The protein belongs to the GHMP kinase family. IspE subfamily.

The enzyme catalyses 4-CDP-2-C-methyl-D-erythritol + ATP = 4-CDP-2-C-methyl-D-erythritol 2-phosphate + ADP + H(+). Its pathway is isoprenoid biosynthesis; isopentenyl diphosphate biosynthesis via DXP pathway; isopentenyl diphosphate from 1-deoxy-D-xylulose 5-phosphate: step 3/6. Functionally, catalyzes the phosphorylation of the position 2 hydroxy group of 4-diphosphocytidyl-2C-methyl-D-erythritol. This Saccharophagus degradans (strain 2-40 / ATCC 43961 / DSM 17024) protein is 4-diphosphocytidyl-2-C-methyl-D-erythritol kinase.